Consider the following 293-residue polypeptide: 4-hydroxy-3-methylbut-2-enyl diphosphate reductase (293 aa).

A [4Fe-4S] cluster-binding site is contributed by Cys12. (2E)-4-hydroxy-3-methylbut-2-enyl diphosphate is bound by residues His40 and His74. His40 and His74 together coordinate dimethylallyl diphosphate. His40 and His74 together coordinate isopentenyl diphosphate. Position 96 (Cys96) interacts with [4Fe-4S] cluster. His128 contributes to the (2E)-4-hydroxy-3-methylbut-2-enyl diphosphate binding site. Position 128 (His128) interacts with dimethylallyl diphosphate. Residue His128 participates in isopentenyl diphosphate binding. Glu130 (proton donor) is an active-site residue. Thr166 is a binding site for (2E)-4-hydroxy-3-methylbut-2-enyl diphosphate. [4Fe-4S] cluster is bound at residue Cys202. Residues Ser230, Ser231, Asn232, and Ser274 each coordinate (2E)-4-hydroxy-3-methylbut-2-enyl diphosphate. 4 residues coordinate dimethylallyl diphosphate: Ser230, Ser231, Asn232, and Ser274. Isopentenyl diphosphate-binding residues include Ser230, Ser231, Asn232, and Ser274.

The protein belongs to the IspH family. The cofactor is [4Fe-4S] cluster.

The enzyme catalyses isopentenyl diphosphate + 2 oxidized [2Fe-2S]-[ferredoxin] + H2O = (2E)-4-hydroxy-3-methylbut-2-enyl diphosphate + 2 reduced [2Fe-2S]-[ferredoxin] + 2 H(+). It catalyses the reaction dimethylallyl diphosphate + 2 oxidized [2Fe-2S]-[ferredoxin] + H2O = (2E)-4-hydroxy-3-methylbut-2-enyl diphosphate + 2 reduced [2Fe-2S]-[ferredoxin] + 2 H(+). It participates in isoprenoid biosynthesis; dimethylallyl diphosphate biosynthesis; dimethylallyl diphosphate from (2E)-4-hydroxy-3-methylbutenyl diphosphate: step 1/1. The protein operates within isoprenoid biosynthesis; isopentenyl diphosphate biosynthesis via DXP pathway; isopentenyl diphosphate from 1-deoxy-D-xylulose 5-phosphate: step 6/6. Catalyzes the conversion of 1-hydroxy-2-methyl-2-(E)-butenyl 4-diphosphate (HMBPP) into a mixture of isopentenyl diphosphate (IPP) and dimethylallyl diphosphate (DMAPP). Acts in the terminal step of the DOXP/MEP pathway for isoprenoid precursor biosynthesis. The polypeptide is 4-hydroxy-3-methylbut-2-enyl diphosphate reductase (Cytophaga hutchinsonii (strain ATCC 33406 / DSM 1761 / CIP 103989 / NBRC 15051 / NCIMB 9469 / D465)).